The following is a 231-amino-acid chain: Cytochrome c oxidase subunit 2 (231 aa).

Residues 1 to 30 lie on the Mitochondrial intermembrane side of the membrane; the sequence is MNNFFQGYNLLFQHSLFASYMDWFHAFNCS. The helical transmembrane segment at 31–51 threads the bilayer; it reads LLLGVLVFVTLLFGYLIFSTF. At 52-64 the chain is on the mitochondrial matrix side; the sequence is YFKSKKIEYQFGE. The helical transmembrane segment at 65 to 85 threads the bilayer; sequence LLCSIFPTIILLMQMVPSLSL. Residues 86-231 are Mitochondrial intermembrane-facing; sequence LYYYGLMNLD…FKSWCFGTME (146 aa). 6 residues coordinate Cu cation: His-164, Cys-199, Glu-201, Cys-203, His-207, and Met-210. Glu-201 contacts Mg(2+).

Belongs to the cytochrome c oxidase subunit 2 family. Component of the cytochrome c oxidase (complex IV, CIV), a multisubunit enzyme composed of a catalytic core of 3 subunits and several supernumerary subunits. The complex exists as a monomer or a dimer and forms supercomplexes (SCs) in the inner mitochondrial membrane with ubiquinol-cytochrome c oxidoreductase (cytochrome b-c1 complex, complex III, CIII). Requires Cu cation as cofactor.

The protein localises to the mitochondrion inner membrane. It carries out the reaction 4 Fe(II)-[cytochrome c] + O2 + 8 H(+)(in) = 4 Fe(III)-[cytochrome c] + 2 H2O + 4 H(+)(out). In terms of biological role, component of the cytochrome c oxidase, the last enzyme in the mitochondrial electron transport chain which drives oxidative phosphorylation. The respiratory chain contains 3 multisubunit complexes succinate dehydrogenase (complex II, CII), ubiquinol-cytochrome c oxidoreductase (cytochrome b-c1 complex, complex III, CIII) and cytochrome c oxidase (complex IV, CIV), that cooperate to transfer electrons derived from NADH and succinate to molecular oxygen, creating an electrochemical gradient over the inner membrane that drives transmembrane transport and the ATP synthase. Cytochrome c oxidase is the component of the respiratory chain that catalyzes the reduction of oxygen to water. Electrons originating from reduced cytochrome c in the intermembrane space (IMS) are transferred via the dinuclear copper A center (CU(A)) of subunit 2 and heme A of subunit 1 to the active site in subunit 1, a binuclear center (BNC) formed by heme A3 and copper B (CU(B)). The BNC reduces molecular oxygen to 2 water molecules using 4 electrons from cytochrome c in the IMS and 4 protons from the mitochondrial matrix. In Caenorhabditis briggsae, this protein is Cytochrome c oxidase subunit 2 (cox-2).